We begin with the raw amino-acid sequence, 311 residues long: tRNA dimethylallyltransferase (311 aa).

Position 11 to 18 (11 to 18) interacts with ATP; that stretch reads GPTAVGKT. 13–18 provides a ligand contact to substrate; the sequence is TAVGKT. Residues 36 to 39 form an interaction with substrate tRNA region; sequence DSVQ.

The protein belongs to the IPP transferase family. As to quaternary structure, monomer. Requires Mg(2+) as cofactor.

The enzyme catalyses adenosine(37) in tRNA + dimethylallyl diphosphate = N(6)-dimethylallyladenosine(37) in tRNA + diphosphate. In terms of biological role, catalyzes the transfer of a dimethylallyl group onto the adenine at position 37 in tRNAs that read codons beginning with uridine, leading to the formation of N6-(dimethylallyl)adenosine (i(6)A). In Exiguobacterium sp. (strain ATCC BAA-1283 / AT1b), this protein is tRNA dimethylallyltransferase.